Consider the following 327-residue polypeptide: Petrobactin synthase (327 aa).

The catalysed reaction is N(8)-citryl-spermidine + 3,4-dihydroxybenzoyl-[aryl-carrier protein] = N(1)-(3,4-dihydroxybenzoyl)-N(8)-citryl-spermidine + holo-[aryl-carrier protein] + H(+). It catalyses the reaction N(8),N'(8)-citryl-bis(spermidine) + 3,4-dihydroxybenzoyl-[aryl-carrier protein] = N(1)-(3,4-dihydroxybenzoyl)-N(8),N'(8)-citryl-bis(spermidine) + holo-[aryl-carrier protein] + H(+). It carries out the reaction N(1)-(3,4-dihydroxybenzoyl)-N(8),N'(8)-citryl-bis(spermidine) + 3,4-dihydroxybenzoyl-[aryl-carrier protein] = petrobactin + holo-[aryl-carrier protein] + H(+). Its pathway is siderophore biosynthesis; petrobactin biosynthesis. In terms of biological role, involved in the biosynthesis of petrobactin, a catecholate siderophore that functions in both iron acquisition and virulence. Transfers the activated 3,4-dihydroxybenzoate (3,4-DHBA) moiety from 3,4-DHBA-loaded AsbD to different receipient molecules, including N-citryl-spermidine, N8,N'8-citryl-bis(spermidine) and N1-(3,4-dihydroxybenzoyl)-N8,N'8-citryl-bis(spermidine). Also catalyzes the transfer of the activated 3,4-DHBA moiety from 3,4-DHBA-loaded AsbD to spermidine to generate DHB-spermidine (DHB-SP). The protein is Petrobactin synthase of Bacillus anthracis.